Here is a 253-residue protein sequence, read N- to C-terminus: uncharacterized protein (253 aa).

2 EamA domains span residues 1–97 and 116–237; these read MFFM…IYSL and FFWA…ISRL. Transmembrane regions (helical) follow at residues 2–22, 28–48, 53–73, 80–100, 101–121, 138–158, 162–182, and 214–234; these read FFMA…AKQL, IFLL…GLLY, ESAV…TLIL, TEVI…LNLG, IYFS…WALF, AVQL…QFYF, INFL…SFYL, and GVNV…GILI.

Belongs to the EamA transporter family.

Its subcellular location is the cell membrane. This is an uncharacterized protein from Acidianus ambivalens (Desulfurolobus ambivalens).